The sequence spans 191 residues: Peptidyl-tRNA hydrolase (191 aa).

Tyrosine 14 contacts tRNA. The active-site Proton acceptor is the histidine 19. TRNA-binding residues include phenylalanine 64, asparagine 66, and asparagine 113.

Belongs to the PTH family. As to quaternary structure, monomer.

The protein localises to the cytoplasm. The catalysed reaction is an N-acyl-L-alpha-aminoacyl-tRNA + H2O = an N-acyl-L-amino acid + a tRNA + H(+). Functionally, hydrolyzes ribosome-free peptidyl-tRNAs (with 1 or more amino acids incorporated), which drop off the ribosome during protein synthesis, or as a result of ribosome stalling. In terms of biological role, catalyzes the release of premature peptidyl moieties from peptidyl-tRNA molecules trapped in stalled 50S ribosomal subunits, and thus maintains levels of free tRNAs and 50S ribosomes. The sequence is that of Peptidyl-tRNA hydrolase from Fusobacterium nucleatum subsp. nucleatum (strain ATCC 25586 / DSM 15643 / BCRC 10681 / CIP 101130 / JCM 8532 / KCTC 2640 / LMG 13131 / VPI 4355).